A 424-amino-acid polypeptide reads, in one-letter code: Geranylgeranyl pyrophosphate synthase D (424 aa).

Positions 42-73 (PSATWPSVPKVHKRNRSTSLSDQQTAKKAHAN) are disordered. Over residues 58-67 (STSLSDQQTA) the composition is skewed to polar residues. 3 residues coordinate isopentenyl diphosphate: Lys-147, Arg-150, and His-179. Mg(2+)-binding residues include Asp-186 and Asp-190. Position 195 (Arg-195) interacts with dimethylallyl diphosphate. Arg-196 provides a ligand contact to isopentenyl diphosphate. Dimethylallyl diphosphate is bound by residues Lys-274, Thr-275, Gln-311, Lys-328, and Lys-338.

It belongs to the FPP/GGPP synthase family. The cofactor is Mg(2+).

The protein localises to the cytoplasm. It catalyses the reaction isopentenyl diphosphate + dimethylallyl diphosphate = (2E)-geranyl diphosphate + diphosphate. The enzyme catalyses isopentenyl diphosphate + (2E)-geranyl diphosphate = (2E,6E)-farnesyl diphosphate + diphosphate. The catalysed reaction is isopentenyl diphosphate + (2E,6E)-farnesyl diphosphate = (2E,6E,10E)-geranylgeranyl diphosphate + diphosphate. It functions in the pathway isoprenoid biosynthesis; farnesyl diphosphate biosynthesis; farnesyl diphosphate from geranyl diphosphate and isopentenyl diphosphate: step 1/1. Its pathway is isoprenoid biosynthesis; geranyl diphosphate biosynthesis; geranyl diphosphate from dimethylallyl diphosphate and isopentenyl diphosphate: step 1/1. The protein operates within isoprenoid biosynthesis; geranylgeranyl diphosphate biosynthesis; geranylgeranyl diphosphate from farnesyl diphosphate and isopentenyl diphosphate: step 1/1. Catalyzes the trans-addition of the 3 molecules of isopentenyl diphosphate (IPP) onto dimethylallyl diphosphate (DMAPP) to form geranylgeranyl pyrophosphate (GGDP). The chain is Geranylgeranyl pyrophosphate synthase D (GGS-D) from Phomopsis amygdali (Fusicoccum amygdali).